We begin with the raw amino-acid sequence, 491 residues long: Monocarboxylate transport permease protein (491 aa).

13 helical membrane-spanning segments follow: residues 7 to 27 (GTAL…GFVA), 55 to 75 (WFLV…PALV), 83 to 103 (FFAL…MPVL), 130 to 150 (LAVA…QLVG), 157 to 177 (ALGL…ALYT), 187 to 207 (LIAF…VALI), 246 to 266 (LALG…GIFA), 277 to 297 (AIML…GYMG), 322 to 342 (WFSG…AAVM), 374 to 396 (ITSL…QFAL), 400 to 422 (LLGG…TNWF), 427 to 447 (LLAG…DAGW), and 465 to 485 (GLLA…LLPA).

The protein belongs to the sodium:solute symporter (SSF) (TC 2.A.21) family.

The protein localises to the cell membrane. With respect to regulation, inhibited by CCCP, but is apparently not affected by the concentration of sodium. Its function is as follows. Low-affinity transporter of alanine and high-affinity transporter of lactate and pyruvate. Can also transport other monocarboxylates such as propionate, butyrate, alpha-hydroxybutyrate or acetate. May be proton coupled. Required for optimal growth on alanine or pyruvate and ammonia. The chain is Monocarboxylate transport permease protein from Rhizobium johnstonii (strain DSM 114642 / LMG 32736 / 3841) (Rhizobium leguminosarum bv. viciae).